The primary structure comprises 476 residues: Major facilitator superfamily domain-containing protein 12 (476 aa).

M1 is modified (N-acetylmethionine). Topologically, residues 1–25 are cytoplasmic; sequence MSPPSDDAGPGPPRTLSLAARLSFA. The chain crosses the membrane as a helical span at residues 26–46; the sequence is VGHFLNDLCAGMWFTYLLLFL. At 47–55 the chain is on the lumenal side; sequence HSVRGYSSR. The chain crosses the membrane as a helical span at residues 56–76; sequence GAGLLLLLGQVADGLCTPLVG. The Cytoplasmic segment spans residues 77 to 94; the sequence is YEADRASCVRCGPRKAWH. A helical transmembrane segment spans residues 95–115; it reads LAGTVCVLLSFPFIFSPCLGC. The Lumenal portion of the chain corresponds to 116–121; sequence GEATPE. Residues 122-142 traverse the membrane as a helical segment; sequence WAALLYYGPFIVVFQFGWAAT. Residues 143 to 167 lie on the Cytoplasmic side of the membrane; that stretch reads QIAHLSLIPELVTSDHEKVELTALR. The helical transmembrane segment at 168 to 188 threads the bilayer; the sequence is YAFTVVANITVYGAAWLLLHL. Over 189 to 213 the chain is Lumenal; that stretch reads QGSAHGEQDISVGDQLGVQDVPVFR. The chain crosses the membrane as a helical span at residues 214-234; the sequence is NLALLVVGVGAIFSLLFHLGT. Residues 235-284 lie on the Cytoplasmic side of the membrane; sequence KEGHRSQHWGNEPNEHTPLVAPAAQPLLLWKHWLREPAFYQVGMLYMTTR. A Phosphothreonine modification is found at T251. The helical transmembrane segment at 285 to 305 threads the bilayer; the sequence is LIVNLSQTYIAMYLTYSLSLP. A topological domain (lumenal) is located at residue K306. Residues 307–327 traverse the membrane as a helical segment; it reads KFIATIPLVMYLSGFFSSFLM. The Cytoplasmic portion of the chain corresponds to 328 to 343; it reads KPVNRRIGRNMTYFTG. The next 2 helical transmembrane spans lie at 344 to 364 and 365 to 385; these read LLVI…GVAV and YGAA…SLAM. The Cytoplasmic portion of the chain corresponds to 386 to 398; it reads TADLIGPHTHSGA. Residues 399–419 form a helical membrane-spanning segment; the sequence is FVYGAMSFSDKVANGLAVMAV. The Lumenal segment spans residues 420–444; sequence QSLHPCPSELCCGACISFYHWVMTA. A helical membrane pass occupies residues 445-465; sequence VTGGVGVAAALALCSLLIWPI. Over 466 to 476 the chain is Cytoplasmic; sequence RIRNRDPRDRP.

This sequence belongs to the major facilitator superfamily. Phosphorylation at Thr-251 by MTOR via mTORC1 pathway promotes cysteine transport in lysosomes, thereby regulating lysosomal cysteine and cystine storage and redox homeostasis.

It localises to the melanosome membrane. The protein resides in the lysosome membrane. It catalyses the reaction L-cysteine(in) = L-cysteine(out). In terms of biological role, transporter that mediates the import of cysteine into melanosomes, thereby regulating skin/hair pigmentation. In melanosomes, cysteine import is required both for normal levels of cystine, the oxidized dimer of cysteine, and provide cysteine for the production of the cysteinyldopas used in pheomelanin synthesis, thereby regulating skin/hair pigmentation. Also catalyzes import of cysteine into lysosomes in non-pigmented cells, regulating lysosomal cystine and cysteine storage, which is essnetial for redox homeostasis. This chain is Major facilitator superfamily domain-containing protein 12, found in Mus musculus (Mouse).